Reading from the N-terminus, the 517-residue chain is Glucans biosynthesis protein G (517 aa).

The signal sequence occupies residues 1-28; that stretch reads MKHKLQMMKMRWLSAAVMLTLYTSSSWA.

The protein belongs to the OpgD/OpgG family.

The protein resides in the periplasm. Its pathway is glycan metabolism; osmoregulated periplasmic glucan (OPG) biosynthesis. Functionally, involved in the biosynthesis of osmoregulated periplasmic glucans (OPGs). In Escherichia coli O1:K1 / APEC, this protein is Glucans biosynthesis protein G.